A 302-amino-acid chain; its full sequence is MKKDFLCLTDWSLEELENLFTLAADLKAKQKAGEQHHLLKGKTLGMLFEKSSTRTRVSFEVGMYQLGGHALFLSSGSTQMGRGEPIKDTGRVMSRYVDGIMIRTFSQEGVEELAQWSTIPIINGLTDMYHPCQVMADLLTVIEHKKNYRDLTYCWIGDGNNMANSWINAAAMFGFELRVATPKGYEPHALVVERAKKLGARVTYLNDPLEAARGAHVLNTDVWASMGQEEEQAKRAAAFAGFQINAETIAAADPACILLHCLPAHRDEEITDEAIESSHAVVFDEAENRLHIQKAIMATLMA.

Carbamoyl phosphate-binding positions include 52-55 (STRT), glutamine 79, arginine 103, and 130-133 (HPCQ). L-ornithine contacts are provided by residues asparagine 161, aspartate 221, and 225-226 (SM). Carbamoyl phosphate-binding positions include 261-262 (CL) and arginine 289.

Belongs to the aspartate/ornithine carbamoyltransferase superfamily. OTCase family.

It is found in the cytoplasm. It carries out the reaction carbamoyl phosphate + L-ornithine = L-citrulline + phosphate + H(+). The protein operates within amino-acid biosynthesis; L-arginine biosynthesis; L-arginine from L-ornithine and carbamoyl phosphate: step 1/3. In terms of biological role, reversibly catalyzes the transfer of the carbamoyl group from carbamoyl phosphate (CP) to the N(epsilon) atom of ornithine (ORN) to produce L-citrulline. This chain is Ornithine carbamoyltransferase, found in Syntrophotalea carbinolica (strain DSM 2380 / NBRC 103641 / GraBd1) (Pelobacter carbinolicus).